We begin with the raw amino-acid sequence, 287 residues long: Undecaprenyl-diphosphatase (287 aa).

Transmembrane regions (helical) follow at residues 50–70 (PGVS…IAYF), 97–117 (LGFA…GIKF), 131–151 (IPSI…AEQV), 160–180 (VVLG…LLPG), 206–226 (FLLG…DALA), 234–254 (LPLL…IDWL), and 264–284 (WLFV…WGVY).

This sequence belongs to the UppP family.

Its subcellular location is the cell inner membrane. It carries out the reaction di-trans,octa-cis-undecaprenyl diphosphate + H2O = di-trans,octa-cis-undecaprenyl phosphate + phosphate + H(+). Functionally, catalyzes the dephosphorylation of undecaprenyl diphosphate (UPP). Confers resistance to bacitracin. The protein is Undecaprenyl-diphosphatase of Synechococcus sp. (strain CC9605).